The sequence spans 95 residues: uncharacterized protein (95 aa).

The signal sequence occupies residues Met1 to Ala21.

This is an uncharacterized protein from Haemophilus influenzae (strain ATCC 51907 / DSM 11121 / KW20 / Rd).